The primary structure comprises 381 residues: Layilin (381 aa).

The signal sequence occupies residues 1 to 24; sequence MQPGAALQAMLLAVLLAKPRDSKG. The Extracellular segment spans residues 25–235; it reads RLLSASDLDP…ERREAALNLA (211 aa). The region spanning 45 to 185 is the C-type lectin domain; sequence TRRPCYKVIY…CNMKNNFICK (141 aa). Intrachain disulfides connect Cys71/Cys184 and Cys150/Cys176. Asn117 carries an N-linked (GlcNAc...) asparagine glycan. Residues 236–256 form a helical membrane-spanning segment; it reads YILIPSIPLFLLLVVTSAVCW. The Cytoplasmic portion of the chain corresponds to 257-381; the sequence is VWICRRKREQ…SGWVENEIYY (125 aa). Phosphoserine is present on residues Ser286 and Ser299. The interval 330 to 374 is interaction with NF2; sequence DYENIAVNPSESGFVTLASMESGFVTNDIYEFSPDRMGRSKESGW. Positions 337 to 381 are interaction with TLN1; sequence NPSESGFVTLASMESGFVTNDIYEFSPDRMGRSKESGWVENEIYY. A run of 5 repeats spans residues 340–344, 350–354, 356–359, 371–375, and 377–380. The 3 X 5 AA repeats of E-S-G-X-V stretch occupies residues 340 to 375; the sequence is ESGFVTLASMESGFVTNDIYEFSPDRMGRSKESGWV. The 2 X 4 AA repeats of N-X-I-Y stretch occupies residues 356–380; that stretch reads NDIYEFSPDRMGRSKESGWVENEIY.

As to quaternary structure, interacts with TLN1. Interacts with NF2 and RDX.

Its subcellular location is the membrane. Its function is as follows. Receptor for hyaluronate. The polypeptide is Layilin (Layn) (Mus musculus (Mouse)).